The primary structure comprises 652 residues: Phosphomethylpyrimidine synthase (652 aa).

Residues Asn-257, Met-286, Tyr-315, His-351, 371–373 (SRG), 412–415 (DGLR), and Glu-451 each bind substrate. Residue His-455 participates in Zn(2+) binding. Tyr-478 is a binding site for substrate. His-519 is a Zn(2+) binding site. 3 residues coordinate [4Fe-4S] cluster: Cys-599, Cys-602, and Cys-607.

It belongs to the ThiC family. As to quaternary structure, homodimer. [4Fe-4S] cluster serves as cofactor.

The enzyme catalyses 5-amino-1-(5-phospho-beta-D-ribosyl)imidazole + S-adenosyl-L-methionine = 4-amino-2-methyl-5-(phosphooxymethyl)pyrimidine + CO + 5'-deoxyadenosine + formate + L-methionine + 3 H(+). It functions in the pathway cofactor biosynthesis; thiamine diphosphate biosynthesis. In terms of biological role, catalyzes the synthesis of the hydroxymethylpyrimidine phosphate (HMP-P) moiety of thiamine from aminoimidazole ribotide (AIR) in a radical S-adenosyl-L-methionine (SAM)-dependent reaction. The chain is Phosphomethylpyrimidine synthase from Thiobacillus denitrificans (strain ATCC 25259 / T1).